A 267-amino-acid polypeptide reads, in one-letter code: tRNA pseudouridine synthase A (267 aa).

Aspartate 51 serves as the catalytic Nucleophile. A substrate-binding site is contributed by tyrosine 109.

Belongs to the tRNA pseudouridine synthase TruA family.

The enzyme catalyses uridine(38/39/40) in tRNA = pseudouridine(38/39/40) in tRNA. Its function is as follows. Formation of pseudouridine at positions 38, 39 and 40 in the anticodon stem and loop of transfer RNAs. The chain is tRNA pseudouridine synthase A from Methanothrix thermoacetophila (strain DSM 6194 / JCM 14653 / NBRC 101360 / PT) (Methanosaeta thermophila).